The primary structure comprises 545 residues: Cryptochrome-1 (545 aa).

In terms of domain architecture, Photolyase/cryptochrome alpha/beta spans 3–140 (INNILWFRHG…RCVENVSHTL (138 aa)). FAD-binding positions include arginine 237, serine 265, serine 267, glutamine 308, histidine 375, 407–409 (DAD), cysteine 413, and asparagine 416.

The protein belongs to the DNA photolyase class-1 family. As to quaternary structure, interacts with tim and per; promoted by light conditions. Requires FAD as cofactor.

Its subcellular location is the cytoplasm. It is found in the perinuclear region. It localises to the nucleus. Its function is as follows. Blue light-dependent regulator that is the input of the circadian feedback loop. Has no photolyase activity for cyclobutane pyrimidine dimers or 6-4 photoproducts. Regulation of expression by light suggests a role in photoreception for locomotor activity rhythms. Functions, together with per, as a transcriptional repressor required for the oscillation of peripheral circadian clocks and for the correct specification of clock cells. Genes directly activated by the transcription factors Clock (Clk) and cycle (cyc) are repressed by cry. In Anopheles gambiae (African malaria mosquito), this protein is Cryptochrome-1.